We begin with the raw amino-acid sequence, 251 residues long: DNA repair protein RecO (251 aa).

Belongs to the RecO family.

Its function is as follows. Involved in DNA repair and RecF pathway recombination. In Albidiferax ferrireducens (strain ATCC BAA-621 / DSM 15236 / T118) (Rhodoferax ferrireducens), this protein is DNA repair protein RecO.